The primary structure comprises 329 residues: (+)-eremophilene synthase (329 aa).

Residues aspartate 91 and glutamate 96 each contribute to the Mg(2+) site. A DDXXD motif motif is present at residues aspartate 91–aspartate 95. Arginine 185 is a binding site for substrate. The Mg(2+) site is built by asparagine 231 and serine 235. A substrate-binding site is contributed by lysine 238. A Mg(2+)-binding site is contributed by glutamate 239. Residue arginine 317 to tyrosine 318 participates in substrate binding.

It belongs to the terpene synthase family. Requires Mg(2+) as cofactor.

The enzyme catalyses (2E,6E)-farnesyl diphosphate = (+)-eremophilene + diphosphate. Its pathway is secondary metabolite biosynthesis; terpenoid biosynthesis. Functionally, catalyzes the conversion of (2E,6E)-farnesyl diphosphate (FPP) to yield the bicyclic sesquiterpene eremophilene via a 1,10-cyclization, which requires the abstraction of the pyrophosphate from FPP to yield the (E,E)-germacradienyl cation. The only accepted substrate is farnesyl diphosphate (FPP). This Sorangium cellulosum (strain So ce56) (Polyangium cellulosum (strain So ce56)) protein is (+)-eremophilene synthase.